The primary structure comprises 1760 residues: Cilia- and flagella-associated protein 44 (1760 aa).

5 WD repeats span residues 119-160, 163-202, 213-251, 276-315, and 388-427; these read GATK…MVLR, CHNT…TGLK, LEIS…CCFA, CHEG…VAEG, and FNGG…ELYK. The segment covering 1155–1165 has biased composition (basic and acidic residues); it reads RQEEKLREQTA. The tract at residues 1155 to 1224 is disordered; sequence RQEEKLREQT…FGTAAARTRS (70 aa). Over residues 1181–1190 the composition is skewed to polar residues; sequence PATNTDTSGA. Residues 1194-1205 show a composition bias toward basic and acidic residues; the sequence is ATRRSEGEDSRK. Residues 1348-1389 are a coiled coil; that stretch reads YDEARNSRDRCLREMEELQRLVQDQTASIEKLQEANKVFRRE. The tract at residues 1420–1444 is disordered; sequence HSDMSGNDDDITSDDDDDDDMGEDE. Residues 1425-1444 show a composition bias toward acidic residues; the sequence is GNDDDITSDDDDDDDMGEDE.

It belongs to the CFAP44 family.

It is found in the cell projection. Its subcellular location is the cilium. It localises to the flagellum. The protein localises to the cytoplasm. The protein resides in the cytoskeleton. It is found in the flagellum axoneme. Functionally, flagellar protein involved in flagellum axoneme organization and function. This is Cilia- and flagella-associated protein 44 from Trypanosoma brucei brucei (strain 927/4 GUTat10.1).